We begin with the raw amino-acid sequence, 310 residues long: N-acetyl-gamma-glutamyl-phosphate reductase (310 aa).

Residue Cys-117 is part of the active site.

The protein belongs to the NAGSA dehydrogenase family. Type 2 subfamily.

Its subcellular location is the cytoplasm. The catalysed reaction is N-acetyl-L-glutamate 5-semialdehyde + phosphate + NADP(+) = N-acetyl-L-glutamyl 5-phosphate + NADPH + H(+). The protein operates within amino-acid biosynthesis; L-arginine biosynthesis; N(2)-acetyl-L-ornithine from L-glutamate: step 3/4. In terms of biological role, catalyzes the NADPH-dependent reduction of N-acetyl-5-glutamyl phosphate to yield N-acetyl-L-glutamate 5-semialdehyde. This is N-acetyl-gamma-glutamyl-phosphate reductase from Allorhizobium ampelinum (strain ATCC BAA-846 / DSM 112012 / S4) (Agrobacterium vitis (strain S4)).